Reading from the N-terminus, the 1073-residue chain is MPLESGKLINDLRVSELKTELEKRGLSTQGVKVVLTVRLNKALRDEGLDPADHVFEHAVSPMKKSTRRSNEMARAAAAAAAEKVEKGAGDEGNDENVLVEEKEEEEEEEDSHDLQIIEDHELEVPSDEKDDTLVEDEEFEEAEQVEPEPEAVEPVVEEKPEEKLEEKPEEKLEEKPEEKPVEPEVVTVEEPVAEVIEVEKAVAEPVELKEKPEKEPEVVLVEEPVEQLENEPEVVPMEVEEAKKSDEQDGEDEFEEDDSSSDIEIIEPTLQESEPLAEEKVEKKEKKPEEIPHNLEQNEPISMETEEKVEEEVIILNSSINNVSQDDEIVLDYEEDLLEDPLDEPIEQKEPKAAEPTPKQLQKVEASTPQATPSKAASSSAGSGKSMLFGDDVKKTSIWIRGMTPATKASSVKQLASQYGKVIQSKIFNSKAADANGDVKNCFALIQFADVTAMELAMTSLHQKNYQGRVLRVEKVSESHLTSSAEKLAREKHVAEAASTMSTSPAPTPTPEPVVTTTTTTSAAPKRKEPIHAPESSSSEGQRAKRRAIEAPVRSRSRSRGGGGEPRSSRKPITFDREEESNRDSRRTIAAAPPARTSRMARSPLRAPLRAARGSESSRSSTRGGGGGGESLTISSRVDTSGCRGGAIKRSVERSVPNNISTSELRRKHHQIHVTVQQDAPRASYQTEQYARERSSSTTTSSRRRQVSPDRSEQRRHRDEPPPRRAPQEQPSRRRGASPPEPPRRQEGARRSEEPERRRLFDEREQLAHIMAAKDMYAEQQKIRAEKALIAFQMQQLEKKKLEAELQIAQKALLMQQAALGGGGALVVDGGALVAGGGAVGYHHQEHRSSYGGGGSSSNGGSSNRRRQTRRSPSPPQQHHSSSRRQRRDSGGAGRYRQSTSSSNSNRNSNSGGRNLVVTATTTNNTNATNAGRSYGIQSVPDASSYSTNNYQQRSSAASAYDLQITATMPQAGAANSGAAYHQPYGNVYQHNTAAYPVWGGLDAQGHMAMDTNWSQNAATPSTSTSSGGGGGQQWQQQSYGSNQHQHHQNNNSSQPSSSNRRGNDYGNYRGNY.

Positions 9–43 (INDLRVSELKTELEKRGLSTQGVKVVLTVRLNKAL) constitute an SAP domain. 3 disordered regions span residues 59-186 (VSPM…PEVV), 207-305 (ELKE…SMET), and 337-388 (LLED…KSML). Residues 91–111 (EGNDENVLVEEKEEEEEEEDS) show a composition bias toward acidic residues. Residues 112–127 (HDLQIIEDHELEVPSD) show a composition bias toward basic and acidic residues. Residues 128–151 (EKDDTLVEDEEFEEAEQVEPEPEA) are compositionally biased toward acidic residues. Composition is skewed to basic and acidic residues over residues 156–182 (VEEK…KPVE) and 207–217 (ELKEKPEKEPE). Acidic residues-rich tracts occupy residues 223-232 (EPVEQLENEP) and 248-265 (QDGE…DIEI). The span at 277–293 (AEEKVEKKEKKPEEIPH) shows a compositional bias: basic and acidic residues. The span at 366–386 (ASTPQATPSKAASSSAGSGKS) shows a compositional bias: low complexity. Residues 396–478 (TSIWIRGMTP…RVLRVEKVSE (83 aa)) enclose the RRM domain. 3 disordered regions span residues 481–759 (LTSS…ERRR), 845–917 (QEHR…RNLV), and 1015–1073 (SQNA…RGNY). Low complexity-rich tracts occupy residues 496-505 (EAASTMSTSP) and 513-524 (PVVTTTTTTSAA). A compositionally biased stretch (basic and acidic residues) spans 573–587 (ITFDREEESNRDSRR). Low complexity predominate over residues 588–622 (TIAAAPPARTSRMARSPLRAPLRAARGSESSRSST). Residues 674 to 689 (VTVQQDAPRASYQTEQ) are compositionally biased toward polar residues. Composition is skewed to basic and acidic residues over residues 707–727 (VSPD…RRAP) and 742–759 (PPRR…ERRR). 3 stretches are compositionally biased toward low complexity: residues 901–917 (SSSN…RNLV), 1015–1026 (SQNAATPSTSTS), and 1034–1060 (QWQQ…SSSN).

As to expression, expressed in most tissues including the hypodermal, muscle, neuronal, vulval and intestinal tissues. Isoform a: Expressed in the pharynx, nerve ring, intestine, neurons and ventral nerve cord.

It localises to the nucleus. Its function is as follows. Involved in pharyngeal muscle development and ensures pharyngeal grinder function during feeding. Plays a role in the defense against the accumulation of ingested live pathogenic bacteria in the intestine. Has a role in the determination of life span. The chain is Pharyngeal muscle protein 2 from Caenorhabditis elegans.